Consider the following 836-residue polypeptide: Protein PDC2 (836 aa).

One can recognise an HTH CENPB-type domain in the interval 64-139; sequence ELIRRRKRAN…VKKLNINITG (76 aa). A compositionally biased stretch (low complexity) spans 626–640; sequence TTSTSVVSDSPSGTT. The disordered stretch occupies residues 626–732; sequence TTSTSVVSDS…NVQFGNGAGS (107 aa). Residues 641 to 651 are compositionally biased toward polar residues; the sequence is QKYNNISTYPN. Positions 677 to 698 are enriched in low complexity; the sequence is GQELQNPQGQQQQEQQQQQQHQ. The span at 699 to 711 shows a compositional bias: polar residues; the sequence is MSGYNFSPISNIE.

Functionally, essential for the synthesis of pyruvate decarboxylase. The sequence is that of Protein PDC2 (PDC2) from Candida albicans (Yeast).